Here is a 322-residue protein sequence, read N- to C-terminus: Undecaprenyl-phosphate 4-deoxy-4-formamido-L-arabinose transferase (322 aa).

Residues 1–235 (MFEIHPVKKV…TCLTTTPLRM (235 aa)) are Cytoplasmic-facing. Residues 236 to 256 (LSLLGSIIAIGGFSIAVLLVI) form a helical membrane-spanning segment. At 257 to 269 (LRLTFGPQWAAEG) the chain is on the periplasmic side. Residues 270 to 290 (VFMLFAVLFTFIGAQFIGMGL) form a helical membrane-spanning segment. Topologically, residues 291–322 (LGEYIGRIYTDVRARPRYFVQQVIRPSSKENE) are cytoplasmic.

Belongs to the glycosyltransferase 2 family.

It localises to the cell inner membrane. It catalyses the reaction UDP-4-deoxy-4-formamido-beta-L-arabinose + di-trans,octa-cis-undecaprenyl phosphate = 4-deoxy-4-formamido-alpha-L-arabinopyranosyl di-trans,octa-cis-undecaprenyl phosphate + UDP. It participates in glycolipid biosynthesis; 4-amino-4-deoxy-alpha-L-arabinose undecaprenyl phosphate biosynthesis; 4-amino-4-deoxy-alpha-L-arabinose undecaprenyl phosphate from UDP-4-deoxy-4-formamido-beta-L-arabinose and undecaprenyl phosphate: step 1/2. The protein operates within bacterial outer membrane biogenesis; lipopolysaccharide biosynthesis. Functionally, catalyzes the transfer of 4-deoxy-4-formamido-L-arabinose from UDP to undecaprenyl phosphate. The modified arabinose is attached to lipid A and is required for resistance to polymyxin and cationic antimicrobial peptides. The polypeptide is Undecaprenyl-phosphate 4-deoxy-4-formamido-L-arabinose transferase (Escherichia coli O139:H28 (strain E24377A / ETEC)).